The following is a 359-amino-acid chain: GTP 3',8-cyclase 1 (359 aa).

Residues 21 to 241 (RCRRMMGDLR…SLEKRYGRIE (221 aa)) form the Radical SAM core domain. R30 serves as a coordination point for GTP. 2 residues coordinate [4Fe-4S] cluster: C37 and C41. An S-adenosyl-L-methionine-binding site is contributed by Y43. C44 lines the [4Fe-4S] cluster pocket. R80 contributes to the GTP binding site. Position 84 (G84) interacts with S-adenosyl-L-methionine. T115 is a GTP binding site. Residue S139 participates in S-adenosyl-L-methionine binding. K176 provides a ligand contact to GTP. M210 provides a ligand contact to S-adenosyl-L-methionine. Residues C273 and C276 each contribute to the [4Fe-4S] cluster site. 278 to 280 (RSR) lines the GTP pocket. [4Fe-4S] cluster is bound at residue C290.

The protein belongs to the radical SAM superfamily. MoaA family. As to quaternary structure, monomer and homodimer. It depends on [4Fe-4S] cluster as a cofactor.

The enzyme catalyses GTP + AH2 + S-adenosyl-L-methionine = (8S)-3',8-cyclo-7,8-dihydroguanosine 5'-triphosphate + 5'-deoxyadenosine + L-methionine + A + H(+). Its pathway is cofactor biosynthesis; molybdopterin biosynthesis. Functionally, catalyzes the cyclization of GTP to (8S)-3',8-cyclo-7,8-dihydroguanosine 5'-triphosphate. This chain is GTP 3',8-cyclase 1, found in Mycobacterium tuberculosis (strain CDC 1551 / Oshkosh).